We begin with the raw amino-acid sequence, 415 residues long: Histidine--tRNA ligase (415 aa).

Belongs to the class-II aminoacyl-tRNA synthetase family. As to quaternary structure, homodimer.

Its subcellular location is the cytoplasm. The catalysed reaction is tRNA(His) + L-histidine + ATP = L-histidyl-tRNA(His) + AMP + diphosphate + H(+). This chain is Histidine--tRNA ligase, found in Clostridium botulinum (strain Langeland / NCTC 10281 / Type F).